Here is a 146-residue protein sequence, read N- to C-terminus: Hemoglobin subunit beta (146 aa).

At valine 1 the chain carries N-acetylvaline. The region spanning 2–146 is the Globin domain; sequence QLSGEEKAAV…VANALAHKYH (145 aa). Residue serine 44 is modified to Phosphoserine. Position 59 is an N6-acetyllysine (lysine 59). Histidine 63 is a heme b binding site. At lysine 82 the chain carries N6-acetyllysine. Histidine 92 is a binding site for heme b. At cysteine 93 the chain carries S-nitrosocysteine. Lysine 144 is subject to N6-acetyllysine.

Belongs to the globin family. Heterotetramer of two alpha chains and two beta chains. In terms of tissue distribution, red blood cells.

Involved in oxygen transport from the lung to the various peripheral tissues. This Equus hemionus kulan (Turkmenian kulan) protein is Hemoglobin subunit beta (HBB).